The chain runs to 85 residues: Small ribosomal subunit protein bS16c (85 aa).

This sequence belongs to the bacterial ribosomal protein bS16 family.

The protein localises to the plastid. Its subcellular location is the chloroplast. The protein is Small ribosomal subunit protein bS16c of Oryza nivara (Indian wild rice).